We begin with the raw amino-acid sequence, 291 residues long: 4-hydroxy-tetrahydrodipicolinate synthase (291 aa).

Thr-44 provides a ligand contact to pyruvate. Tyr-132 (proton donor/acceptor) is an active-site residue. Lys-160 (schiff-base intermediate with substrate) is an active-site residue. Position 202 (Ile-202) interacts with pyruvate.

This sequence belongs to the DapA family. As to quaternary structure, homotetramer; dimer of dimers.

Its subcellular location is the cytoplasm. The enzyme catalyses L-aspartate 4-semialdehyde + pyruvate = (2S,4S)-4-hydroxy-2,3,4,5-tetrahydrodipicolinate + H2O + H(+). The protein operates within amino-acid biosynthesis; L-lysine biosynthesis via DAP pathway; (S)-tetrahydrodipicolinate from L-aspartate: step 3/4. Functionally, catalyzes the condensation of (S)-aspartate-beta-semialdehyde [(S)-ASA] and pyruvate to 4-hydroxy-tetrahydrodipicolinate (HTPA). The chain is 4-hydroxy-tetrahydrodipicolinate synthase from Syntrophobacter fumaroxidans (strain DSM 10017 / MPOB).